The chain runs to 315 residues: MSEMVNVHGWMEEALSSQDEMKERNQSAYDIISGLCHEERGSIDGEEDDEEEEDGEKPKKRGPKKKKMTKARVERFRVRRVKANARERSRMHGLNDALENLRRVMPCYSKTQKLSKIETLRLARNYIWALSDILEQGQNAEGKGFLEILCKGLSQPTSNLVAGCLQLGPQAMFLDKHEEKSHICDSSLTGHTYNYQSPGLPSPPYGNIDVHHLHLKPSSFKPVMDPSVVTHTLNCTTPPYEGALTPPLSIGGNFSLKQDSSPDMDKSYAFRSPYPALGLGGSHGHASHFHTSVPRYELPIDMAYEPYPHHAIFTE.

Residues Glu-39–Ala-71 are disordered. Residues Asp-44–Gly-55 show a composition bias toward acidic residues. The segment covering Pro-58–Lys-70 has biased composition (basic residues). Residues Val-78–Leu-130 form the bHLH domain. Ser-89 carries the phosphoserine modification.

Efficient DNA binding requires dimerization with another bHLH protein. Forms a heterodimer with the bHLH protein hes2, and weakly interacts with hey1/hrt1. Serine or threonine phosphorylation within the basic region may regulate neurogenic activity. As to expression, first expressed weakly at stage 12 in primary neuronal precursors. At stages 18 and 21, strongly expressed in the cranial ganglions, with weaker expression remaining in the spinal cord. Later, strongly expressed at sites of neuronal differentiation, namely the eye, forebrain and cranial ganglions.

It is found in the nucleus. Functionally, probably acts as a transcriptional activator. Mediates neuronal differentiation. Required for the regulation of amacrine cell fate specification in the retina. This is Neurogenic differentiation factor 4 (neurod4) from Xenopus laevis (African clawed frog).